A 166-amino-acid polypeptide reads, in one-letter code: Regulatory protein RecX (166 aa).

The protein belongs to the RecX family.

The protein resides in the cytoplasm. Its function is as follows. Modulates RecA activity. This Salmonella arizonae (strain ATCC BAA-731 / CDC346-86 / RSK2980) protein is Regulatory protein RecX.